Here is a 79-residue protein sequence, read N- to C-terminus: Small ribosomal subunit protein uS17 (79 aa).

Belongs to the universal ribosomal protein uS17 family. In terms of assembly, part of the 30S ribosomal subunit.

Functionally, one of the primary rRNA binding proteins, it binds specifically to the 5'-end of 16S ribosomal RNA. The protein is Small ribosomal subunit protein uS17 of Caulobacter sp. (strain K31).